The chain runs to 455 residues: MFS-type transporter SLC18B1 (455 aa).

Met-1 bears the N-acetylmethionine mark. The interval 1-26 is disordered; the sequence is MDTAGPPAPAGTEGDGPGGSTGETSR. The Cytoplasmic portion of the chain corresponds to 1-32; the sequence is MDTAGPPAPAGTEGDGPGGSTGETSRRLSKEQ. Ser-20 is subject to Phosphoserine. A helical transmembrane segment spans residues 33–53; that stretch reads IFVLVSAASMNLGCMMTYSIL. Residues 54–69 are Extracellular-facing; that stretch reads GPFFPKEAEKKGASNT. The helical transmembrane segment at 70–90 threads the bilayer; that stretch reads TIGMIFGCYALFELLASLVFG. Topologically, residues 91–99 are cytoplasmic; that stretch reads KYLVHIGAK. The chain crosses the membrane as a helical span at residues 100–120; sequence FMFIAGMFVSGGVTILFGVLD. Over 121–126 the chain is Extracellular; it reads QLPEGP. The chain crosses the membrane as a helical span at residues 127-147; that stretch reads IFIAMCFLVRIVDAIGFGAAI. At 148–166 the chain is on the cytoplasmic side; the sequence is TASSSILAKAFPNNVATVM. Residues 167 to 187 traverse the membrane as a helical segment; sequence GSLEVFSGLGLVAGPPLGGLL. Residues 188–194 lie on the Extracellular side of the membrane; it reads YQSFGYE. Residues 195 to 215 form a helical membrane-spanning segment; sequence VPFIFLGCIVLLMIPLNLCIL. Residues 216-232 lie on the Cytoplasmic side of the membrane; it reads PSYESDAGKQSFWKLVT. Residues 233-253 traverse the membrane as a helical segment; it reads LPKIGLIAFVIISLSSCFGFL. The Extracellular segment spans residues 254–271; sequence DPTLSLFVMKKFSLSTGY. The helical transmembrane segment at 272–292 threads the bilayer; it reads VGLVFLGLSLSYAISSPLFGL. Residues 293 to 303 lie on the Cytoplasmic side of the membrane; sequence LSDKMPNLRKW. A helical transmembrane segment spans residues 304–324; it reads FLVFGNLITAGCYMLLGPIPL. Topologically, residues 325–330 are extracellular; that stretch reads LHIKSQ. A helical transmembrane segment spans residues 331 to 351; it reads LWLLVLVLVINGVSAGMSIIP. At 352–376 the chain is on the cytoplasmic side; sequence TFPEMLSCAYANGFEDGISTLGLVS. The chain crosses the membrane as a helical span at residues 377–397; it reads GLFGAMWSVGAFMGPILGGFL. Residues 398–406 are Extracellular-facing; the sequence is CEKIGFEWA. A helical transmembrane segment spans residues 407 to 427; the sequence is AAIQGLWTLLSGVAMALFYLW. Topologically, residues 428–455 are cytoplasmic; it reads EDSTMRRSKAQNILGTEEEQAALLPNDT.

In terms of tissue distribution, expressed in brain structures, particularly in hippocampus, cortex, and cerebellum (at protein level). Expressed in astrocytes and hippocampal neurons (at protein level). Expressed in peritoneal mast cells.

The protein resides in the cytoplasmic vesicle. It is found in the secretory vesicle membrane. It localises to the secretory vesicle. The protein localises to the synaptic vesicle membrane. It catalyses the reaction spermine(in) + n H(+)(out) = spermine(out) + n H(+)(in). The enzyme catalyses spermidine(in) + n H(+)(out) = spermidine(out) + n H(+)(in). It carries out the reaction serotonin(in) + n H(+)(out) = serotonin(out) + n H(+)(in). Proton-coupled polyamine antiporter involved in the translocation of polyamines from cytosol into secretory vesicles prior to their release via exocytosis. Uses the electrochemical proton gradient generated by a V-type proton-pumping ATPase to couple the efflux of protons with the uptake of a polyamine molecule. Facilitates vesicular storage of spermine and spermidine in astrocytes with an impact on glutamatergic neuronal transmission and memory formation. Upon antigen stimulation, regulates polyamine accumulation and release in mast cell secretory granules, which in turn potentiates mast cell degranulation and histamine secretion. This chain is MFS-type transporter SLC18B1, found in Rattus norvegicus (Rat).